Consider the following 230-residue polypeptide: Aminodeoxyfutalosine nucleosidase (230 aa).

Glu-13 functions as the Proton acceptor in the catalytic mechanism. Residues Gly-80, Val-154, and 174–175 (ME) each bind substrate. Residue Asp-198 is the Proton donor of the active site.

This sequence belongs to the PNP/UDP phosphorylase family. MtnN subfamily. Homodimer.

The catalysed reaction is 6-amino-6-deoxyfutalosine + H2O = dehypoxanthine futalosine + adenine. It carries out the reaction S-adenosyl-L-homocysteine + H2O = S-(5-deoxy-D-ribos-5-yl)-L-homocysteine + adenine. The enzyme catalyses S-methyl-5'-thioadenosine + H2O = 5-(methylsulfanyl)-D-ribose + adenine. It catalyses the reaction 5'-deoxyadenosine + H2O = 5-deoxy-D-ribose + adenine. It functions in the pathway quinol/quinone metabolism; menaquinone biosynthesis. The protein operates within amino-acid biosynthesis; L-methionine biosynthesis via salvage pathway; S-methyl-5-thio-alpha-D-ribose 1-phosphate from S-methyl-5'-thioadenosine (hydrolase route): step 1/2. With respect to regulation, is inhibited by the transition state analog BuT-DADMe-ImmA. This compound is also able to inhibit H.pylori growth and is more efficient than antibiotics commonly used in ulcer therapy. Functionally, catalyzes the direct conversion of aminodeoxyfutalosine (AFL) into dehypoxanthine futalosine (DHFL) and adenine via the hydrolysis of the N-glycosidic bond; this reaction seems to represent an essential step in the menaquinone biosynthesis pathway in Helicobacter species. Also catalyzes the hydrolysis of 5'-methylthioadenosine (MTA) to adenine and 5'-methylthioribose. Can also probably use S-adenosylhomocysteine (SAH) as substrate, leading to adenine and S-ribosylhomocysteine. These other activities highlight the tremendous versatility of the enzyme, which also plays key roles in S-adenosylmethionine recycling and in the biosynthesis of the quorum-sensing molecule autoinducer-2. This chain is Aminodeoxyfutalosine nucleosidase (mtnN), found in Helicobacter pylori (strain J99 / ATCC 700824) (Campylobacter pylori J99).